The primary structure comprises 204 residues: Ribonuclease HII (204 aa).

One can recognise an RNase H type-2 domain in the interval 1 to 197 (MILGIDEAGR…KNRILNPKLL (197 aa)). 3 residues coordinate a divalent metal cation: aspartate 6, glutamate 7, and aspartate 103.

This sequence belongs to the RNase HII family. Mn(2+) serves as cofactor. Requires Mg(2+) as cofactor.

The protein localises to the cytoplasm. The catalysed reaction is Endonucleolytic cleavage to 5'-phosphomonoester.. In terms of biological role, endonuclease that specifically degrades the RNA of RNA-DNA hybrids. This Helicobacter pylori (strain Shi470) protein is Ribonuclease HII.